Here is a 289-residue protein sequence, read N- to C-terminus: Nitrogenase iron protein (289 aa).

8–15 is a binding site for ATP; that stretch reads GKGGIGKS. C96 serves as a coordination point for [4Fe-4S] cluster. R99 bears the ADP-ribosylarginine; by dinitrogenase reductase ADP-ribosyltransferase mark. Position 130 (C130) interacts with [4Fe-4S] cluster.

Belongs to the NifH/BchL/ChlL family. Homodimer. The cofactor is [4Fe-4S] cluster. The reversible ADP-ribosylation of Arg-99 inactivates the nitrogenase reductase and regulates nitrogenase activity.

It catalyses the reaction N2 + 8 reduced [2Fe-2S]-[ferredoxin] + 16 ATP + 16 H2O = H2 + 8 oxidized [2Fe-2S]-[ferredoxin] + 2 NH4(+) + 16 ADP + 16 phosphate + 6 H(+). In terms of biological role, the key enzymatic reactions in nitrogen fixation are catalyzed by the nitrogenase complex, which has 2 components: the iron protein and the molybdenum-iron protein. In Parafrankia sp. (strain EAN1pec), this protein is Nitrogenase iron protein.